The primary structure comprises 309 residues: Ribosomal RNA small subunit methyltransferase H (309 aa).

S-adenosyl-L-methionine-binding positions include 33–35, Asp53, Phe79, Asp100, and Gln107; that span reads GGH.

The protein belongs to the methyltransferase superfamily. RsmH family.

The protein resides in the cytoplasm. The enzyme catalyses cytidine(1402) in 16S rRNA + S-adenosyl-L-methionine = N(4)-methylcytidine(1402) in 16S rRNA + S-adenosyl-L-homocysteine + H(+). In terms of biological role, specifically methylates the N4 position of cytidine in position 1402 (C1402) of 16S rRNA. The polypeptide is Ribosomal RNA small subunit methyltransferase H (Clostridium botulinum (strain Okra / Type B1)).